The primary structure comprises 164 residues: ATP synthase subunit b (164 aa).

The helical transmembrane segment at 8 to 28 (FGIIFWQTITLLFVLFILGKF) threads the bilayer.

It belongs to the ATPase B chain family. As to quaternary structure, F-type ATPases have 2 components, F(1) - the catalytic core - and F(0) - the membrane proton channel. F(1) has five subunits: alpha(3), beta(3), gamma(1), delta(1), epsilon(1). F(0) has three main subunits: a(1), b(2) and c(10-14). The alpha and beta chains form an alternating ring which encloses part of the gamma chain. F(1) is attached to F(0) by a central stalk formed by the gamma and epsilon chains, while a peripheral stalk is formed by the delta and b chains.

The protein resides in the cell membrane. In terms of biological role, f(1)F(0) ATP synthase produces ATP from ADP in the presence of a proton or sodium gradient. F-type ATPases consist of two structural domains, F(1) containing the extramembraneous catalytic core and F(0) containing the membrane proton channel, linked together by a central stalk and a peripheral stalk. During catalysis, ATP synthesis in the catalytic domain of F(1) is coupled via a rotary mechanism of the central stalk subunits to proton translocation. Its function is as follows. Component of the F(0) channel, it forms part of the peripheral stalk, linking F(1) to F(0). In Amoebophilus asiaticus (strain 5a2), this protein is ATP synthase subunit b.